A 708-amino-acid polypeptide reads, in one-letter code: Ion-translocating oxidoreductase complex subunit C (708 aa).

2 consecutive 4Fe-4S ferredoxin-type domains span residues Gly-369–Tyr-397 and Lys-407–Phe-436. Residues Cys-377, Cys-380, Cys-383, Cys-387, Cys-416, Cys-419, Cys-422, and Cys-426 each coordinate [4Fe-4S] cluster. The interval Lys-599 to Ala-686 is disordered.

This sequence belongs to the 4Fe4S bacterial-type ferredoxin family. RnfC subfamily. The complex is composed of six subunits: RsxA, RsxB, RsxC, RsxD, RsxE and RsxG. [4Fe-4S] cluster is required as a cofactor.

It is found in the cell inner membrane. Its function is as follows. Part of a membrane-bound complex that couples electron transfer with translocation of ions across the membrane. Required to maintain the reduced state of SoxR. This chain is Ion-translocating oxidoreductase complex subunit C, found in Escherichia coli (strain 55989 / EAEC).